The sequence spans 205 residues: Holliday junction branch migration complex subunit RuvA (205 aa).

The interval M1 to N64 is domain I. The interval D65 to T143 is domain II. The tract at residues G144–I156 is flexible linker. Residues S157–L205 are domain III.

The protein belongs to the RuvA family. In terms of assembly, homotetramer. Forms an RuvA(8)-RuvB(12)-Holliday junction (HJ) complex. HJ DNA is sandwiched between 2 RuvA tetramers; dsDNA enters through RuvA and exits via RuvB. An RuvB hexamer assembles on each DNA strand where it exits the tetramer. Each RuvB hexamer is contacted by two RuvA subunits (via domain III) on 2 adjacent RuvB subunits; this complex drives branch migration. In the full resolvosome a probable DNA-RuvA(4)-RuvB(12)-RuvC(2) complex forms which resolves the HJ.

It localises to the cytoplasm. Its function is as follows. The RuvA-RuvB-RuvC complex processes Holliday junction (HJ) DNA during genetic recombination and DNA repair, while the RuvA-RuvB complex plays an important role in the rescue of blocked DNA replication forks via replication fork reversal (RFR). RuvA specifically binds to HJ cruciform DNA, conferring on it an open structure. The RuvB hexamer acts as an ATP-dependent pump, pulling dsDNA into and through the RuvAB complex. HJ branch migration allows RuvC to scan DNA until it finds its consensus sequence, where it cleaves and resolves the cruciform DNA. The protein is Holliday junction branch migration complex subunit RuvA of Yersinia enterocolitica serotype O:8 / biotype 1B (strain NCTC 13174 / 8081).